The primary structure comprises 1188 residues: Major DNA-binding protein (1188 aa).

The short motif at 838–839 (FW) is the Required for filament formation element. Positions 1145 to 1175 (CDDDDADKDAPHGAKSDVPNGDDEDVFAGPS) are disordered. The segment at 1166–1188 (DDEDVFAGPSAKKRTLATEILFC) is required for nuclear localization.

It belongs to the herpesviridae major DNA-binding protein family. In terms of assembly, homooligomers. Forms double-helical filaments necessary for the formation of replication compartments within the host nucleus. Interacts with the origin-binding protein. Interacts with the helicase primase complex; this interaction stimulates primer synthesis activity of the helicase-primase complex. Interacts with the DNA polymerase. Interacts with the alkaline exonuclease; this interaction increases its nuclease processivity.

The protein localises to the host nucleus. Its function is as follows. Plays several crucial roles in viral infection. Participates in the opening of the viral DNA origin to initiate replication by interacting with the origin-binding protein. May disrupt loops, hairpins and other secondary structures present on ssDNA to reduce and eliminate pausing of viral DNA polymerase at specific sites during elongation. Promotes viral DNA recombination by performing strand-transfer, characterized by the ability to transfer a DNA strand from a linear duplex to a complementary single-stranded DNA circle. Can also catalyze the renaturation of complementary single strands. Additionally, reorganizes the host cell nucleus, leading to the formation of prereplicative sites and replication compartments. This process is driven by the protein which can form double-helical filaments in the absence of DNA. The protein is Major DNA-binding protein of Amazona oratrix (yellow-headed parrot).